Consider the following 427-residue polypeptide: F-box protein At2g16450 (427 aa).

Residues 1–45 (MNPSPITIDLILEILSRLPAKSVRRFHCVSKRWASIFGSPYFKEL) form the F-box domain.

This is F-box protein At2g16450 from Arabidopsis thaliana (Mouse-ear cress).